Reading from the N-terminus, the 626-residue chain is Putative Xaa-Pro dipeptidyl-peptidase (626 aa).

Residues Ser231, Asp348, and His379 each act as charge relay system in the active site.

It belongs to the peptidase S15 family.

It carries out the reaction Hydrolyzes Xaa-Pro-|- bonds to release unblocked, N-terminal dipeptides from substrates including Ala-Pro-|-p-nitroanilide and (sequentially) Tyr-Pro-|-Phe-Pro-|-Gly-Pro-|-Ile.. This chain is Putative Xaa-Pro dipeptidyl-peptidase, found in Rhodopirellula baltica (strain DSM 10527 / NCIMB 13988 / SH1).